The primary structure comprises 333 residues: MTTTTERPDAPIRHDWTVAEIQAIYDLPLLDLVHRASLVHRAHHDPADIQRASLLSIKTGGCPEDCAYCPQSAHHKEAGIGRQRLMPVEAVLREAEAAKAAGATRFCMGAAWRQPKDGPEFDAVLAMVRGVRGLGMEACVTLGMLTPSQAERLAEAGLTAYNHNLDTGPDFYGDIISTRTYADRLNTLQAVRDAGIGVCCGGIIGMGEGVADRAAMLQVLANHAPHPESVPINALVAVAGTPLAERPPVDPLDLVRMCATARIVMPKARVRLSAGRRALTREAQVLCFLAGANSIFYGERLLTTANNEADADAQLLRDIGVPVPGIEVLEAAE.

In terms of domain architecture, Radical SAM core spans 47–276; that stretch reads ADIQRASLLS…KARVRLSAGR (230 aa). Residues Cys-62, Cys-66, and Cys-69 each contribute to the [4Fe-4S] cluster site. Residues Cys-107, Cys-139, Cys-199, and Arg-271 each contribute to the [2Fe-2S] cluster site.

It belongs to the radical SAM superfamily. Biotin synthase family. In terms of assembly, homodimer. It depends on [4Fe-4S] cluster as a cofactor. Requires [2Fe-2S] cluster as cofactor.

It catalyses the reaction (4R,5S)-dethiobiotin + (sulfur carrier)-SH + 2 reduced [2Fe-2S]-[ferredoxin] + 2 S-adenosyl-L-methionine = (sulfur carrier)-H + biotin + 2 5'-deoxyadenosine + 2 L-methionine + 2 oxidized [2Fe-2S]-[ferredoxin]. It participates in cofactor biosynthesis; biotin biosynthesis; biotin from 7,8-diaminononanoate: step 2/2. Functionally, catalyzes the conversion of dethiobiotin (DTB) to biotin by the insertion of a sulfur atom into dethiobiotin via a radical-based mechanism. In Methylobacterium nodulans (strain LMG 21967 / CNCM I-2342 / ORS 2060), this protein is Biotin synthase.